The chain runs to 464 residues: C-terminal processing peptidase, chloroplastic (464 aa).

The N-terminal 32 residues, 1–32 (MHSRTNCLQTSVRAPQPHFRPFTAVKTCRQRC), are a transit peptide targeting the chloroplast. Residues 33–77 (STTAAAAKRDQAQEQQPWIQVGLGLAAAATAVAVGLGAAALPAQA) constitute a thylakoid transit peptide. In terms of domain architecture, PDZ spans 149 to 234 (LAALRRGTAG…SQVEVVLHAP (86 aa)). Catalysis depends on charge relay system residues Ser372 and Lys397.

The protein belongs to the peptidase S41A family. Monomer.

It localises to the plastid. The protein localises to the chloroplast thylakoid lumen. The catalysed reaction is The enzyme shows specific recognition of a C-terminal tripeptide, Xaa-Yaa-Zaa, in which Xaa is preferably Ala or Leu, Yaa is preferably Ala or Tyr, and Zaa is preferably Ala, but then cleaves at a variable distance from the C-terminus. A typical cleavage is -Ala-Ala-|-Arg-Ala-Ala-Lys-Glu-Asn-Tyr-Ala-Leu-Ala-Ala.. Its activity is regulated as follows. Not inhibited by antipain, 4-amidinophenylmethanesulfonyl fluoride, aprotinin, chymostatin, 3,4-dichloroisocoumarin, diisopropyl fluorophosphate, E64, EDTA, EGTA, iodoacetamide, leupeptin, pepstatin, o-phenanthroline, N-ethylmaleimide, phosphoramidon or phenylmethylsulfonyl fluoride. Its function is as follows. Protease involved in the C-terminal processing of the chloroplastic D1 protein of photosystem II. This proteolytic processing is necessary to allow the light-driven assembly of the tetranuclear manganese cluster, which is responsible for photosynthetic water oxidation. In Tetradesmus obliquus (Green alga), this protein is C-terminal processing peptidase, chloroplastic (ctpA).